Reading from the N-terminus, the 303-residue chain is ADP-ribosyl cyclase/cyclic ADP-ribose hydrolase 1 (303 aa).

Residues 1-21 (MANYEFSQVSEDRPGCRLTRK) are Cytoplasmic-facing. Residues 22–44 (AQIGLGVGLLLLVALVVVVVIVL) form a helical; Signal-anchor for type II membrane protein membrane-spanning segment. The Extracellular segment spans residues 45–303 (WPRSPLVWKG…PEHPSCRLNV (259 aa)). Intrachain disulfides connect C69-C85, C102-C183, and C163-C176. An N-linked (GlcNAc...) asparagine glycan is attached at N103. The active site involves C122. N-linked (GlcNAc...) asparagine glycosylation is present at N123. C204 is an active-site residue. N-linked (GlcNAc...) asparagine glycans are attached at residues N212 and N222. 2 disulfides stabilise this stretch: C257–C278 and C290–C299.

It belongs to the ADP-ribosyl cyclase family. As to quaternary structure, homodimer. In terms of tissue distribution, spleen, liver, heart, thymus, thyroid gland, ileum, colon, cerebellum, salivary gland, adrenal gland, jejunum, islets of Langerhans and osteoclasts.

Its subcellular location is the cell membrane. It catalyses the reaction NAD(+) = cyclic ADP-beta-D-ribose + nicotinamide + H(+). The catalysed reaction is nicotinate + NADP(+) = nicotinate-adenine dinucleotide phosphate + nicotinamide. The enzyme catalyses NAD(+) + H2O = ADP-D-ribose + nicotinamide + H(+). With respect to regulation, both NAADP and cADPR synthesis are inhibited by nicotinic acid. Its function is as follows. Synthesizes the second messengers cyclic ADP-ribose and nicotinate-adenine dinucleotide phosphate, the former a second messenger for glucose-induced insulin secretion, the latter a Ca(2+) mobilizer. Also has cADPR hydrolase activity. Regulates osteoclastic bone resorption, probably via production of cyclic ADP-ribose and triggering of a cytosolic calcium ion signal through ryanodine receptor activation. The sequence is that of ADP-ribosyl cyclase/cyclic ADP-ribose hydrolase 1 (Cd38) from Rattus norvegicus (Rat).